The primary structure comprises 226 residues: Urease accessory protein UreF (226 aa).

Belongs to the UreF family. As to quaternary structure, ureD, UreF and UreG form a complex that acts as a GTP-hydrolysis-dependent molecular chaperone, activating the urease apoprotein by helping to assemble the nickel containing metallocenter of UreC. The UreE protein probably delivers the nickel.

The protein resides in the cytoplasm. Its function is as follows. Required for maturation of urease via the functional incorporation of the urease nickel metallocenter. The polypeptide is Urease accessory protein UreF (Burkholderia cenocepacia (strain HI2424)).